Here is a 480-residue protein sequence, read N- to C-terminus: Gamma-aminobutyric acid receptor subunit rho-1 (480 aa).

Residues 1 to 21 (MLAVRNMKFGIFLLWWGWVLA) form the signal peptide. Residues 22–281 (AESTVHWPGR…LYINFTLRRH (260 aa)) lie on the Extracellular side of the membrane. Residues 31–67 (REVHEPSKKGSRPQRQRRGAHDDAHKQGSPILKRSSD) form a disordered region. The span at 39-48 (KGSRPQRQRR) shows a compositional bias: basic residues. Arg126 provides a ligand contact to 4-aminobutanoate. A glycan (N-linked (GlcNAc...) asparagine) is linked at Asn141. Ser190 lines the 4-aminobutanoate pocket. An intrachain disulfide couples Cys199 to Cys213. Glu218 lines the 4-aminobutanoate pocket. N-linked (GlcNAc...) asparagine glycans are attached at residues Asn235 and Asn275. A helical membrane pass occupies residues 282–302 (IFFFLLQTYFPATLMVMLSWV). The Cytoplasmic segment spans residues 303–314 (SFWIDRRAVPAR). The helical transmembrane segment at 315–335 (VPLGITTVLTMSTIITGVNAS) threads the bilayer. Over 336–346 (MPRVSYIKAVD) the chain is Extracellular. A helical transmembrane segment spans residues 347–367 (IYLWVSFVFVFLSVLEYAAVN). Topologically, residues 368-458 (YLTTVQERKE…MRINTHAIDK (91 aa)) are cytoplasmic. A helical transmembrane segment spans residues 459 to 479 (YSRIIFPAAYILFNLIYWSIF). A topological domain (extracellular) is located at residue Ser480.

The protein belongs to the ligand-gated ion channel (TC 1.A.9) family. Gamma-aminobutyric acid receptor (TC 1.A.9.5) subfamily. GABRR1 sub-subfamily. Three rho subunits (rho-1/GBRR1, rho-2/GBRR2 and rho-3/GBRR3) coassemble either to form functional homopentamers or heteropentamers. Rho-1/GBRR1 subunits can also associate with alpha-1/GBRA1 subunits to form a functional GABAAR. Interacts with SQSTM1.

It localises to the postsynaptic cell membrane. The protein resides in the cell membrane. The catalysed reaction is chloride(in) = chloride(out). Inhibited by TPMPA, a rho-specific antagonist. Inhibited by picrotoxin, when forming a homopentamer. In contrast with other GABAARs, rho-1 GABAAR is not inhibited by bicuculline, when forming a homopentamer. Down-regulated by external protons when forming a homopentamer. Its function is as follows. Rho subunit of the pentameric ligand-gated chloride channels responsible for mediating the effects of gamma-aminobutyric acid (GABA), the major inhibitory neurotransmitter in the brain. Rho-containing GABA-gated chloride channels are a subclass of GABA(A) receptors (GABAARs) entirely composed of rho subunits, where GABA molecules bind at the rho intersubunit interfaces. When activated by GABA, rho-GABAARs selectively allow the flow of chloride anions across the cell membrane down their electrochemical gradient. Rho-1 subunits are primarily expressed in retina where rho-1-containing GABAARs may play a role in retinal neurotransmission. Rho-1 GABAARs are also involved in neuronal tonic (extrasynaptic) and phasic (synaptic) transmission in the Purkinje neurons of the cerebellum. Rho-1 GABAARs may also contribute to the regulation of glial development in the cerebellum by controlling extrasynaptic transmission. The sequence is that of Gamma-aminobutyric acid receptor subunit rho-1 from Rattus norvegicus (Rat).